Consider the following 236-residue polypeptide: Lectin alpha chain (236 aa).

E8 and D10 together coordinate Mn(2+). Ca(2+) contacts are provided by D10, Y12, N14, and D19. Y12 lines the a carbohydrate pocket. 3 residues coordinate Mn(2+): D19, H24, and S34. 99-100 (LY) contacts a carbohydrate. D207 is a Ca(2+) binding site. R227 lines the a carbohydrate pocket.

It belongs to the leguminous lectin family. As to quaternary structure, equilibrium between homodimer and homotetramer. Oligomerization is pH-dependent with homotetramers forming at pH 6.5 and above. The beta and gamma chains are produced by partial proteolytic processing of the lectin alpha chain by an asparaginyl endopeptidase. Mixture of 60% alpha lectin and 40% of its beta and gamma proteolytic fragments. Seed.

Its function is as follows. D-mannose/D-glucose-binding lectin. Has anti-inflammatory activity in rats. Induces histamine release in mast cells from rat. Induces lymphocyte proliferation and IFNG production. In Cratylia argentea (Cratylia floribunda), this protein is Lectin alpha chain.